The primary structure comprises 154 residues: Large ribosomal subunit protein uL13 (154 aa).

This sequence belongs to the universal ribosomal protein uL13 family. In terms of assembly, part of the 50S ribosomal subunit.

Functionally, this protein is one of the early assembly proteins of the 50S ribosomal subunit, although it is not seen to bind rRNA by itself. It is important during the early stages of 50S assembly. The polypeptide is Large ribosomal subunit protein uL13 (Bartonella henselae (strain ATCC 49882 / DSM 28221 / CCUG 30454 / Houston 1) (Rochalimaea henselae)).